A 178-amino-acid polypeptide reads, in one-letter code: Cell division protein ZapC (178 aa).

The protein belongs to the ZapC family. In terms of assembly, interacts directly with FtsZ.

The protein resides in the cytoplasm. Contributes to the efficiency of the cell division process by stabilizing the polymeric form of the cell division protein FtsZ. Acts by promoting interactions between FtsZ protofilaments and suppressing the GTPase activity of FtsZ. This is Cell division protein ZapC from Aeromonas hydrophila subsp. hydrophila (strain ATCC 7966 / DSM 30187 / BCRC 13018 / CCUG 14551 / JCM 1027 / KCTC 2358 / NCIMB 9240 / NCTC 8049).